The sequence spans 82 residues: Small ribosomal subunit protein bS16 (82 aa).

The protein belongs to the bacterial ribosomal protein bS16 family.

In Marinomonas sp. (strain MWYL1), this protein is Small ribosomal subunit protein bS16.